Consider the following 1483-residue polypeptide: Chromosome partition protein MukB (1483 aa).

34-41 (GGNGAGKS) is a binding site for ATP. Coiled-coil stretches lie at residues 326–418 (LEAD…QYNQ), 444–480 (LETF…QAYQ), 509–601 (RHLA…MQRA), 780–804 (RAAC…FATL), 837–923 (EIRQ…AKLE), 977–1115 (EMLS…TAKA), and 1209–1265 (VEAI…LQNV). The tract at residues 666 to 783 (PGGSEDQRLN…EVPLFGRAAC (118 aa)) is flexible hinge.

Belongs to the SMC family. MukB subfamily. In terms of assembly, homodimerization via its hinge domain. Binds to DNA via its C-terminal region. Interacts, and probably forms a ternary complex, with MukE and MukF via its C-terminal region. The complex formation is stimulated by calcium or magnesium. Interacts with tubulin-related protein FtsZ.

Its subcellular location is the cytoplasm. It is found in the nucleoid. Plays a central role in chromosome condensation, segregation and cell cycle progression. Functions as a homodimer, which is essential for chromosome partition. Involved in negative DNA supercoiling in vivo, and by this means organize and compact chromosomes. May achieve or facilitate chromosome segregation by condensation DNA from both sides of a centrally located replisome during cell division. This chain is Chromosome partition protein MukB, found in Shigella dysenteriae serotype 1 (strain Sd197).